The following is a 244-amino-acid chain: Orotidine 5'-phosphate decarboxylase (244 aa).

Substrate-binding positions include Asp-12, Lys-34, 61-70 (DLKLFDIPNT), Thr-125, Arg-187, Gln-196, Gly-216, and Arg-217. Lys-63 functions as the Proton donor in the catalytic mechanism.

This sequence belongs to the OMP decarboxylase family. Type 1 subfamily. As to quaternary structure, homodimer.

The enzyme catalyses orotidine 5'-phosphate + H(+) = UMP + CO2. It functions in the pathway pyrimidine metabolism; UMP biosynthesis via de novo pathway; UMP from orotate: step 2/2. Functionally, catalyzes the decarboxylation of orotidine 5'-monophosphate (OMP) to uridine 5'-monophosphate (UMP). In Dictyoglomus thermophilum (strain ATCC 35947 / DSM 3960 / H-6-12), this protein is Orotidine 5'-phosphate decarboxylase.